The sequence spans 623 residues: Arginine decarboxylase 2 (623 aa).

Lysine 109 carries the post-translational modification N6-(pyridoxal phosphate)lysine. 295–305 (LDCGGGLGVDY) serves as a coordination point for substrate.

It belongs to the Orn/Lys/Arg decarboxylase class-II family. SpeA subfamily. Pyridoxal 5'-phosphate serves as cofactor. The cofactor is Mg(2+). Expressed in stems (at protein level).

It catalyses the reaction L-arginine + H(+) = agmatine + CO2. Its pathway is amine and polyamine biosynthesis; agmatine biosynthesis; agmatine from L-arginine: step 1/1. The sequence is that of Arginine decarboxylase 2 (ADC2) from Oryza sativa subsp. japonica (Rice).